The primary structure comprises 242 residues: NAD(P)H-quinone oxidoreductase subunit K (242 aa).

4 residues coordinate [4Fe-4S] cluster: C60, C61, C125, and C156.

This sequence belongs to the complex I 20 kDa subunit family. As to quaternary structure, NDH-1 can be composed of about 15 different subunits; different subcomplexes with different compositions have been identified which probably have different functions. Requires [4Fe-4S] cluster as cofactor.

The protein resides in the cellular thylakoid membrane. The catalysed reaction is a plastoquinone + NADH + (n+1) H(+)(in) = a plastoquinol + NAD(+) + n H(+)(out). It catalyses the reaction a plastoquinone + NADPH + (n+1) H(+)(in) = a plastoquinol + NADP(+) + n H(+)(out). NDH-1 shuttles electrons from an unknown electron donor, via FMN and iron-sulfur (Fe-S) centers, to quinones in the respiratory and/or the photosynthetic chain. The immediate electron acceptor for the enzyme in this species is believed to be plastoquinone. Couples the redox reaction to proton translocation, and thus conserves the redox energy in a proton gradient. Cyanobacterial NDH-1 also plays a role in inorganic carbon-concentration. The chain is NAD(P)H-quinone oxidoreductase subunit K from Prochlorococcus marinus (strain SARG / CCMP1375 / SS120).